We begin with the raw amino-acid sequence, 240 residues long: Ribonuclease 3 (240 aa).

In terms of domain architecture, RNase III spans 13–143; it reads DHASLLEALG…LLGAVHLQHG (131 aa). Residue glutamate 53 participates in Mg(2+) binding. Aspartate 57 is a catalytic residue. Mg(2+) is bound by residues aspartate 129 and glutamate 132. Glutamate 132 is an active-site residue. Positions 170-238 constitute a DRBM domain; that stretch reads DWKTSLQELT…AGAAYQALTA (69 aa).

The protein belongs to the ribonuclease III family. Homodimer. Mg(2+) is required as a cofactor.

It localises to the cytoplasm. The catalysed reaction is Endonucleolytic cleavage to 5'-phosphomonoester.. Functionally, digests double-stranded RNA. Involved in the processing of primary rRNA transcript to yield the immediate precursors to the large and small rRNAs (23S and 16S). Processes some mRNAs, and tRNAs when they are encoded in the rRNA operon. Processes pre-crRNA and tracrRNA of type II CRISPR loci if present in the organism. The polypeptide is Ribonuclease 3 (Nocardia farcinica (strain IFM 10152)).